The primary structure comprises 182 residues: Ribulose bisphosphate carboxylase small subunit, chloroplastic 5 (182 aa).

Residues 1-49 constitute a chloroplast transit peptide; the sequence is MASSLMSNAATTMAAATTTAQANMVAPFNGLKSISAFPVTRKNNDITSV.

The protein belongs to the RuBisCO small chain family. As to quaternary structure, heterohexadecamer of 8 large and 8 small subunits.

The protein resides in the plastid. It is found in the chloroplast. RuBisCO catalyzes two reactions: the carboxylation of D-ribulose 1,5-bisphosphate, the primary event in carbon dioxide fixation, as well as the oxidative fragmentation of the pentose substrate. Both reactions occur simultaneously and in competition at the same active site. Although the small subunit is not catalytic it is essential for maximal activity. In Mesembryanthemum crystallinum (Common ice plant), this protein is Ribulose bisphosphate carboxylase small subunit, chloroplastic 5.